The following is a 931-amino-acid chain: Protein translocase subunit SecA (931 aa).

ATP contacts are provided by residues Gln-87, 105 to 109 (GEGKT), and Asp-515. Residues Cys-915, Cys-917, Cys-926, and His-927 each coordinate Zn(2+).

This sequence belongs to the SecA family. Monomer and homodimer. Part of the essential Sec protein translocation apparatus which comprises SecA, SecYEG and auxiliary proteins SecDF-YajC and YidC. Requires Zn(2+) as cofactor.

Its subcellular location is the cell inner membrane. The protein localises to the cytoplasm. It carries out the reaction ATP + H2O + cellular proteinSide 1 = ADP + phosphate + cellular proteinSide 2.. Its function is as follows. Part of the Sec protein translocase complex. Interacts with the SecYEG preprotein conducting channel. Has a central role in coupling the hydrolysis of ATP to the transfer of proteins into and across the cell membrane, serving both as a receptor for the preprotein-SecB complex and as an ATP-driven molecular motor driving the stepwise translocation of polypeptide chains across the membrane. The sequence is that of Protein translocase subunit SecA from Burkholderia ambifaria (strain MC40-6).